The primary structure comprises 285 residues: Ribonuclease H1 (285 aa).

The segment at 72–126 (RSSSSPDGSKGQESAHEQKSQAKTSKRPREPLGEGEELPEPGPKHTRQDTEPAAV) is disordered. Positions 135–281 (MGESVIVYTD…ADRLAREGAK (147 aa)) constitute an RNase H type-1 domain. The Mg(2+) site is built by Asp-144, Glu-185, Asp-209, and Asp-273.

Belongs to the RNase H family. Monomer. Mg(2+) is required as a cofactor.

It localises to the cytoplasm. It carries out the reaction Endonucleolytic cleavage to 5'-phosphomonoester.. In the presence of magnesium, manganese is inhibitory. Its function is as follows. Endonuclease that specifically degrades the RNA of RNA-DNA hybrids. Plays a role in RNA polymerase II (RNAp II) transcription termination by degrading R-loop RNA-DNA hybrid formation at G-rich pause sites located downstream of the poly(A) site and behind the elongating RNAp II. This chain is Ribonuclease H1 (Rnaseh1), found in Mus musculus (Mouse).